Consider the following 319-residue polypeptide: Quinolinate synthase (319 aa).

Residues H35 and S52 each contribute to the iminosuccinate site. C97 lines the [4Fe-4S] cluster pocket. Iminosuccinate is bound by residues Y123–N125 and S140. Residue C183 participates in [4Fe-4S] cluster binding. Residues H209–E211 and T226 contribute to the iminosuccinate site. C276 contacts [4Fe-4S] cluster.

The protein belongs to the quinolinate synthase family. Type 2 subfamily. It depends on [4Fe-4S] cluster as a cofactor.

The protein resides in the cytoplasm. It carries out the reaction iminosuccinate + dihydroxyacetone phosphate = quinolinate + phosphate + 2 H2O + H(+). The protein operates within cofactor biosynthesis; NAD(+) biosynthesis; quinolinate from iminoaspartate: step 1/1. Functionally, catalyzes the condensation of iminoaspartate with dihydroxyacetone phosphate to form quinolinate. This is Quinolinate synthase from Microcystis aeruginosa (strain NIES-843 / IAM M-2473).